A 435-amino-acid polypeptide reads, in one-letter code: Histone acetyltransferase type B subunit 2 (435 aa).

5 WD repeats span residues 135-175 (NHAG…SKAP), 188-228 (GQTK…KQDP), 238-278 (GHSA…TAKA), 284-324 (GHNA…TKHH), and 328-368 (AHTN…AEQT). An interaction with the histone H4 N-terminus region spans residues 370–374 (DDAED). The stretch at 385–425 (GHTSKVCDISWSPSSPWTIASASEDNILQVWEPSRHLRTPY) is one WD 6 repeat.

This sequence belongs to the WD repeat RBAP46/RBAP48/MSI1 family. Component of the HAT-B complex composed of at least HAT1 and HAT2. The HAT-B complex binds to histone H4 tail.

It localises to the cytoplasm. Its subcellular location is the nucleus. Regulatory subunit of the histone acetylase B (HAT-B) complex. The complex acetylates 'Lys-12' of histone H4 which is required for telomeric silencing. This chain is Histone acetyltransferase type B subunit 2 (HAT2), found in Cryptococcus neoformans var. neoformans serotype D (strain B-3501A) (Filobasidiella neoformans).